A 104-amino-acid polypeptide reads, in one-letter code: Transcription elongation factor A protein-like 9 (104 aa).

A disordered region spans residues methionine 1–arginine 48. Residues glycine 9 to glutamate 31 are compositionally biased toward basic and acidic residues. Over residues glycine 32–serine 41 the composition is skewed to acidic residues.

It belongs to the TFS-II family. TFA subfamily.

It localises to the nucleus. Its function is as follows. May be involved in transcriptional regulation. This Mus musculus (Mouse) protein is Transcription elongation factor A protein-like 9 (Tceal9).